A 141-amino-acid chain; its full sequence is Large ribosomal subunit protein bL17 (141 aa).

The segment at threonine 120–alanine 141 is disordered.

This sequence belongs to the bacterial ribosomal protein bL17 family. Part of the 50S ribosomal subunit. Contacts protein L32.

The protein is Large ribosomal subunit protein bL17 of Novosphingobium aromaticivorans (strain ATCC 700278 / DSM 12444 / CCUG 56034 / CIP 105152 / NBRC 16084 / F199).